The chain runs to 415 residues: Prostacyclin receptor (415 aa).

A disordered region spans residues 1–21; the sequence is MMASDGHPGPPSVTPGSPLSA. The Extracellular portion of the chain corresponds to 1–44; sequence MMASDGHPGPPSVTPGSPLSAGGREWQGMAGSCWNITYVQDSVG. Intrachain disulfides connect Cys-33-Cys-193 and Cys-120-Cys-198. Asn-35 is a glycosylation site (N-linked (GlcNAc...) asparagine). A helical transmembrane segment spans residues 45–66; that stretch reads PATSTLMFVAGVVGNGLALGIL. Residues 67–79 lie on the Cytoplasmic side of the membrane; sequence GARRRSHPSAFAV. A helical transmembrane segment spans residues 80–104; the sequence is LVTGLAVTDLLGTCFLSPAVFVAYA. Over 105-122 the chain is Extracellular; that stretch reads RNSSLLGLAHGGTMLCDT. Residues 123 to 143 form a helical membrane-spanning segment; that stretch reads FAFAMTFFGLASTLILFAMAV. The Cytoplasmic segment spans residues 144–162; that stretch reads ERCLALSHPYLYAQLDGPR. Residues 163 to 186 form a helical membrane-spanning segment; sequence CARFALPSIYAFCCLFCSLPLLGL. Topologically, residues 187 to 215 are extracellular; sequence GEHQQYCPGSWCFIRMRSAQPGGCAFSLA. A helical membrane pass occupies residues 216 to 236; that stretch reads YASLMALLVTSIFFCNGSVTL. The Cytoplasmic portion of the chain corresponds to 237–263; it reads SLYHMYRQQRRHHGSFVPTSRAREDEV. Residues 264-288 form a helical membrane-spanning segment; sequence YHLILLALMTVIMAVCSLPLMIRGF. Topologically, residues 289–301 are extracellular; the sequence is TQAIAPDSREMGD. Residues 302 to 322 form a helical membrane-spanning segment; the sequence is LLAFRFNAFNPILDPWVFILF. The Cytoplasmic segment spans residues 323–415; sequence RKAVFQRLKF…SEAIAACSLC (93 aa). Residues 349–370 form a disordered region; sequence PLSRPASGRRDPPAPTSLQAKE. Phosphoserine is present on Ser-365. Residue Cys-412 is modified to Cysteine methyl ester. The S-farnesyl cysteine moiety is linked to residue Cys-412. Positions 413–415 are cleaved as a propeptide — removed in mature form; that stretch reads SLC.

Belongs to the G-protein coupled receptor 1 family. Interacts (non-isoprenylated C-terminus) with PDZK1. Post-translationally, isoprenylation does not influence ligand binding but is required for efficient coupling to the effectors adenylyl cyclase and phospholipase C.

The protein resides in the cell membrane. In terms of biological role, receptor for prostacyclin (prostaglandin I2 or PGI2). The activity of this receptor is mediated by G(s) proteins which activate adenylate cyclase. The chain is Prostacyclin receptor (Ptgir) from Mus musculus (Mouse).